The primary structure comprises 280 residues: Eukaryotic translation initiation factor 3 subunit F-1 (280 aa).

Residues 8 to 138 (VRVHPVVLFQ…LRAYVCIQLG (131 aa)) form the MPN domain.

This sequence belongs to the eIF-3 subunit F family. In terms of assembly, component of the eukaryotic translation initiation factor 3 (eIF-3) complex. The eIF-3 complex interacts with pix.

The protein resides in the cytoplasm. Component of the eukaryotic translation initiation factor 3 (eIF-3) complex, which is involved in protein synthesis of a specialized repertoire of mRNAs and, together with other initiation factors, stimulates binding of mRNA and methionyl-tRNAi to the 40S ribosome. The eIF-3 complex specifically targets and initiates translation of a subset of mRNAs involved in cell proliferation. The sequence is that of Eukaryotic translation initiation factor 3 subunit F-1 from Drosophila erecta (Fruit fly).